A 196-amino-acid polypeptide reads, in one-letter code: Carnitine operon protein CaiE (196 aa).

Residues Thr-173–Arg-196 are disordered.

The protein belongs to the transferase hexapeptide repeat family.

It functions in the pathway amine and polyamine metabolism; carnitine metabolism. Functionally, overproduction of CaiE stimulates the activity of CaiB and CaiD. This chain is Carnitine operon protein CaiE, found in Escherichia coli (strain SMS-3-5 / SECEC).